The following is a 211-amino-acid chain: ATP phosphoribosyltransferase (211 aa).

This sequence belongs to the ATP phosphoribosyltransferase family. Short subfamily. As to quaternary structure, heteromultimer composed of HisG and HisZ subunits.

It localises to the cytoplasm. It catalyses the reaction 1-(5-phospho-beta-D-ribosyl)-ATP + diphosphate = 5-phospho-alpha-D-ribose 1-diphosphate + ATP. Its pathway is amino-acid biosynthesis; L-histidine biosynthesis; L-histidine from 5-phospho-alpha-D-ribose 1-diphosphate: step 1/9. In terms of biological role, catalyzes the condensation of ATP and 5-phosphoribose 1-diphosphate to form N'-(5'-phosphoribosyl)-ATP (PR-ATP). Has a crucial role in the pathway because the rate of histidine biosynthesis seems to be controlled primarily by regulation of HisG enzymatic activity. The sequence is that of ATP phosphoribosyltransferase from Sorangium cellulosum (strain So ce56) (Polyangium cellulosum (strain So ce56)).